We begin with the raw amino-acid sequence, 147 residues long: uncharacterized protein (147 aa).

The region spanning 1–59 is the Response regulatory domain; the sequence is MGAELVKWVKSHKIDAHIITFVAKMPYIDSIKLLEAGAKGCVWKTSHPAKLNRAIDSIS. The region spanning 78–143 is the HTH luxR-type domain; that stretch reads RYSSDNQLTN…ELIKTALRMG (66 aa). The segment at residues 102–121 is a DNA-binding region (H-T-H motif); the sequence is NKEIANFLQLSRKTVETHRL.

Post-translationally, overexpressed protein is phosphorylated in vitro by non-cognate histidine kinases BarA and UhpB.

This is an uncharacterized protein from Escherichia coli (strain K12).